Reading from the N-terminus, the 215-residue chain is Rac-like GTP-binding protein ARAC10 (215 aa).

15-22 (GDGAVGKT) provides a ligand contact to GTP. Positions 37–45 (YIPTVFDNF) match the Effector region motif. GTP is bound by residues 62–66 (DTAGQ) and 120–123 (TKLD). S-palmitoyl cysteine attachment occurs at residues C202 and C208.

Belongs to the small GTPase superfamily. Rho family. As to quaternary structure, component of the active ARAC10-IRC5-KIN13A complex. Interacts with ICR5.

It is found in the membrane. It localises to the cytoplasm. The protein resides in the cytoskeleton. In terms of biological role, involved in local disassembly of cortical microtubules when associated with ICR5 and KIN13A. This chain is Rac-like GTP-binding protein ARAC10 (ARAC10), found in Arabidopsis thaliana (Mouse-ear cress).